A 1873-amino-acid chain; its full sequence is Girdin (1873 aa).

The 121-residue stretch at 12 to 132 (QFMTSPLVTW…KLLLLLLGCA (121 aa)) folds into the Calponin-homology (CH) domain. The stretch at 196 to 425 (HLRRLIDERD…EMAQKQSMDE (230 aa)) forms a coiled coil. Ser-233, Ser-237, and Ser-449 each carry phosphoserine. Coiled coils occupy residues 458 to 1232 (TSSK…ESKN) and 1268 to 1385 (HKNL…KFYD). 2 disordered regions span residues 816-841 (ENKS…NKRL) and 1013-1034 (EERM…GRES). Ser-1020 carries the post-translational modification Phosphoserine. Phosphoserine is present on Ser-1387. Residues 1390–1408 (RRRGNWITLKMRKLIKSKK) form a phosphoinositide-binding region. Residues 1407-1416 (KKDINRERQK) are compositionally biased toward basic and acidic residues. Disordered regions lie at residues 1407–1459 (KKDI…LGTK), 1560–1602 (TTSF…SNNN), and 1616–1643 (QSRP…GSSP). A Phosphoserine; by PKB/AKT1 modification is found at Ser-1417. Polar residues-rich tracts occupy residues 1417–1430 (SLTL…SSEG), 1445–1459 (VGSN…LGTK), 1560–1579 (TTSF…STGS), and 1616–1626 (QSRPQSHSSGD). The residue at position 1421 (Thr-1421) is a Phosphothreonine. A GBA motif is present at residues 1674–1704 (KAGSPGSEVVTLQQFLEESNKLTSIQLKSSS). A phosphoserine mark is found at Ser-1677, Ser-1692, and Ser-1719. Residues 1715-1825 (SLSVSSDFLG…GTTRRTSIHD (111 aa)) form an SH2-like; required for interaction with growth factor receptors region. Residues 1738–1873 (SGKTPGDFYD…KSRSREQQSS (136 aa)) are disordered. Residues 1745–1755 (FYDRRTTKPEF) show a composition bias toward basic and acidic residues. Position 1767 is a phosphotyrosine (Tyr-1767). Polar residues-rich tracts occupy residues 1768 to 1781 (TISS…STQG), 1789 to 1801 (TSVS…SNPY), and 1809 to 1820 (SVISTAEGTTRR). Phosphotyrosine is present on Tyr-1801. Residues Ser-1822 and Ser-1839 each carry the phosphoserine modification. Over residues 1822-1832 (SIHDFLSKDSR) the composition is skewed to basic and acidic residues. The span at 1839-1852 (SSPPTAGSSSTTAS) shows a compositional bias: low complexity. Positions 1858–1873 (QESRNSKSRSREQQSS) are enriched in basic and acidic residues.

The protein belongs to the CCDC88 family. As to quaternary structure, homodimer. Interacts (via GBA motif) with guanine nucleotide-binding protein G(i) alpha subunits GNAI1, GNAI2 and GNAI3. Also interacts (via GNA motif) with guanine nucleotide-binding protein G(s) alpha subunit GNAS. Interaction with G(i) alpha subunits occurs before interaction with GNAS and is regulated by phosphorylation; phosphorylation at Ser-1677 enhances binding to G(i) alpha subunits while phosphorylation at Ser-1692 abolishes G(i) alpha subunit binding, promoting binding to GNAS. Interacts (via C-terminal SH2-like region) with growth factor receptors EGFR, INSR and KDR/VEGFR2 (via their autophosphorylated cytoplasmic tails). Forms a complex with EGFR and GNAI3 which leads to enhanced EGFR signaling and triggering of cell migration; ligand stimulation is required for recruitment of GNAI3 to the complex. Interacts (tyrosine-phosphorylated form) with phosphatidylinositol 3-kinase (PI3K) regulatory subunit PIK3R1/p85a (via SH2 domains); the interaction enables recruitment of PIK3R1 to the EGFR receptor, enhancing PI3K activity and cell migration. Interacts with serine/threonine-protein kinase PRKCQ; the interaction leads to phosphorylation of CCDC88A and inhibition of its guanine nucleotide exchange factor activity. Interacts (via C-terminus) with DISC1; the interaction is direct. Interacts with AKT proteins; the interaction is inhibited in the presence of DISC1. Interacts with AKT1/PKB (via C-terminus). The non-phosphorylated form interacts with phosphatidylinositol 4-phosphate [Pi(4)P] and weakly with phosphatidylinositol 3-phosphate [Pi(3)P]. Interacts with microtubules. Interacts with actin. Phosphorylation is induced by epidermal growth factor (EGF) in a phosphoinositide 3-kinase (PI3K)-dependent manner. Phosphorylation by AKT1/PKB is necessary for the delocalization from the cell membrane and for cell migration. Phosphorylated on tyrosine residues which promotes binding to phosphatidylinositol 3-kinase (PI3K) regulatory subunit PIK3R1/p85a and enhances PI3K activity. Tyrosine-phosphorylated by both receptor and non-receptor tyrosine kinases in vitro. Tyrosine phosphorylation is required for AKT1-dependent phosphorylation of Ser-1417. Phosphorylation at Ser-1692 by PRKCQ disrupts interaction with GNAI3 and inhibits guanine nucleotide exchange factor activity. In terms of tissue distribution, expressed in the dentate gyrus, pyramidal cell layer of hippocampal regions CA1 and CA3 at postnatal 15. Expressed highly in neurons. Weakly in neuron progenitors (at protein level). Expressed in the dentate granule cell layer of the hippocampus. Expressed highly in the adult testis, moderately in the brain and at a low level in the spleen, lungs and fat.

Its subcellular location is the cell membrane. It localises to the cytoplasm. The protein resides in the cytosol. It is found in the cytoplasmic vesicle. The protein localises to the cell projection. Its subcellular location is the lamellipodium. It localises to the cytoskeleton. The protein resides in the cilium basal body. It is found in the microtubule organizing center. The protein localises to the centrosome. Its subcellular location is the centriole. Bifunctional modulator of guanine nucleotide-binding proteins (G proteins). Acts as a non-receptor guanine nucleotide exchange factor which binds to and activates guanine nucleotide-binding protein G(i) alpha subunits. Also acts as a guanine nucleotide dissociation inhibitor for guanine nucleotide-binding protein G(s) subunit alpha GNAS. Essential for cell migration. Interacts in complex with G(i) alpha subunits with the EGFR receptor, retaining EGFR at the cell membrane following ligand stimulation and promoting EGFR signaling which triggers cell migration. Binding to Gi-alpha subunits displaces the beta and gamma subunits from the heterotrimeric G-protein complex which enhances phosphoinositide 3-kinase (PI3K)-dependent phosphorylation and kinase activity of AKT1/PKB. Phosphorylation of AKT1/PKB induces the phosphorylation of downstream effectors GSK3 and FOXO1/FKHR, and regulates DNA replication and cell proliferation. Binds in its tyrosine-phosphorylated form to the phosphatidylinositol 3-kinase (PI3K) regulatory subunit PIK3R1 which enables recruitment of PIK3R1 to the EGFR receptor, enhancing PI3K activity and cell migration. Plays a role as a key modulator of the AKT-mTOR signaling pathway, controlling the tempo of the process of newborn neuron integration during adult neurogenesis, including correct neuron positioning, dendritic development and synapse formation. Inhibition of G(s) subunit alpha GNAS leads to reduced cellular levels of cAMP and suppression of cell proliferation. Essential for the integrity of the actin cytoskeleton. Required for formation of actin stress fibers and lamellipodia. May be involved in membrane sorting in the early endosome. Plays a role in ciliogenesis and cilium morphology and positioning and this may partly be through regulation of the localization of scaffolding protein CROCC/Rootletin. The sequence is that of Girdin (Ccdc88a) from Mus musculus (Mouse).